A 656-amino-acid chain; its full sequence is DNA ligase (656 aa).

Residues 32–36 and 81–82 each bind NAD(+); these read DAIYD and SL. Lys-112 serves as the catalytic N6-AMP-lysine intermediate. Arg-133, Glu-167, and Lys-306 together coordinate NAD(+). Zn(2+) contacts are provided by Cys-400, Cys-403, Cys-416, and Cys-421. Positions 577–656 constitute a BRCT domain; it reads KSSSVFNNKT…ELLKRLKELD (80 aa).

The protein belongs to the NAD-dependent DNA ligase family. LigA subfamily. Requires Mg(2+) as cofactor. The cofactor is Mn(2+).

The catalysed reaction is NAD(+) + (deoxyribonucleotide)n-3'-hydroxyl + 5'-phospho-(deoxyribonucleotide)m = (deoxyribonucleotide)n+m + AMP + beta-nicotinamide D-nucleotide.. DNA ligase that catalyzes the formation of phosphodiester linkages between 5'-phosphoryl and 3'-hydroxyl groups in double-stranded DNA using NAD as a coenzyme and as the energy source for the reaction. It is essential for DNA replication and repair of damaged DNA. This is DNA ligase from Helicobacter pylori (strain ATCC 700392 / 26695) (Campylobacter pylori).